Here is a 294-residue protein sequence, read N- to C-terminus: N-acetylmuramic acid 6-phosphate etherase (294 aa).

The SIS domain occupies 54–217 (VIASFRKGGR…STTSMIGVGK (164 aa)). Catalysis depends on glutamate 82, which acts as the Proton donor. Glutamate 113 is a catalytic residue.

Belongs to the GCKR-like family. MurNAc-6-P etherase subfamily. Homodimer.

The catalysed reaction is N-acetyl-D-muramate 6-phosphate + H2O = N-acetyl-D-glucosamine 6-phosphate + (R)-lactate. It participates in amino-sugar metabolism; N-acetylmuramate degradation. In terms of biological role, specifically catalyzes the cleavage of the D-lactyl ether substituent of MurNAc 6-phosphate, producing GlcNAc 6-phosphate and D-lactate. This chain is N-acetylmuramic acid 6-phosphate etherase, found in Exiguobacterium sp. (strain ATCC BAA-1283 / AT1b).